The following is a 151-amino-acid chain: Protein-export protein SecB (151 aa).

This sequence belongs to the SecB family. As to quaternary structure, homotetramer, a dimer of dimers. One homotetramer interacts with 1 SecA dimer.

Its subcellular location is the cytoplasm. One of the proteins required for the normal export of preproteins out of the cell cytoplasm. It is a molecular chaperone that binds to a subset of precursor proteins, maintaining them in a translocation-competent state. It also specifically binds to its receptor SecA. The protein is Protein-export protein SecB of Acinetobacter baylyi (strain ATCC 33305 / BD413 / ADP1).